Consider the following 509-residue polypeptide: Activin receptor type-1 (509 aa).

The first 20 residues, 1–20, serve as a signal peptide directing secretion; that stretch reads MVDGVMILPVLVMIAFPFPS. Topologically, residues 21 to 123 are extracellular; that stretch reads MEDEKPKVNP…FPGTQNFHLE (103 aa). N102 carries an N-linked (GlcNAc...) asparagine glycan. A helical transmembrane segment spans residues 124–146; that stretch reads VGLIILSVVFAVCLLACLLGVAL. At 147–509 the chain is on the cytoplasmic side; that stretch reads RKFKRRNQER…NSLDKLKTDC (363 aa). The 30-residue stretch at 178–207 folds into the GS domain; sequence STLADLLDHSCTSGSGSGLPFLVQRTVARQ. The 295-residue stretch at 208-502 folds into the Protein kinase domain; that stretch reads ITLLECVGKG…KTLTKIDNSL (295 aa). ATP is bound by residues 214–222 and K235; that span reads VGKGRYGEV. D336 serves as the catalytic Proton acceptor. S501 is modified (phosphoserine).

It belongs to the protein kinase superfamily. TKL Ser/Thr protein kinase family. TGFB receptor subfamily. As to quaternary structure, interacts with FKBP1A. Interacts with FCHO1. Interacts with CLU. Interacts with type II receptors AMHR2 and ACVR2A. Interacts with BMP7. Interacts with BMP9. Interacts with BMP6 (when glycosylated); the interaction may induce HAMP expression. Interacts with TSC22D1/TSC-22. Requires Mg(2+) as cofactor. The cofactor is Mn(2+).

The protein localises to the membrane. It catalyses the reaction L-threonyl-[receptor-protein] + ATP = O-phospho-L-threonyl-[receptor-protein] + ADP + H(+). It carries out the reaction L-seryl-[receptor-protein] + ATP = O-phospho-L-seryl-[receptor-protein] + ADP + H(+). Its function is as follows. Bone morphogenetic protein (BMP) type I receptor that is involved in a wide variety of biological processes, including bone, heart, cartilage, nervous, and reproductive system development and regulation. As a type I receptor, forms heterotetrameric receptor complexes with the type II receptors AMHR2, ACVR2A ors ACVR2B. Upon binding of ligands such as BMP7 or BMP9 to the heteromeric complexes, type II receptors transphosphorylate ACVR1 intracellular domain. In turn, ACVR1 kinase domain is activated and subsequently phosphorylates SMAD1/5/8 proteins that transduce the signal. In addition to its role in mediating BMP pathway-specific signaling, suppresses TGFbeta/activin pathway signaling by interfering with the binding of activin to its type II receptor. Besides canonical SMAD signaling, can activate non-canonical signaling pathways. May promote the expression of HAMP, potentially via its interaction with BMP6. This is Activin receptor type-1 (ACVR1) from Bos taurus (Bovine).